A 47-amino-acid chain; its full sequence is PhoP/PhoQ regulator MgrB (47 aa).

Residues 6–26 form a helical membrane-spanning segment; that stretch reads WVVLVVVVLACLLLWAQVFNM.

The protein belongs to the MgrB family. May form homooligomers. Probably interacts with the periplasmic domain of PhoQ.

The protein resides in the cell inner membrane. Its function is as follows. PhoP-regulated transcription is redox-sensitive, being activated when the periplasm becomes more reducing. MgrB acts between DsbA/DsbB and PhoP/PhoQ in this pathway. Represses PhoP/PhoQ signaling, possibly by binding to the periplasmic domain of PhoQ, altering its activity and that of downstream effector PhoP. The sequence is that of PhoP/PhoQ regulator MgrB from Escherichia coli O157:H7.